The chain runs to 100 residues: MSVDKETVAKIASLARIKMTDAELEKMAPELSNILDWVEQLGEVDTSDVEPMTAVIPNTLRLREDEVNADPLTGGGVRDKVLANAPAAEHGFFGVPKVIE.

This sequence belongs to the GatC family. In terms of assembly, heterotrimer of A, B and C subunits.

It carries out the reaction L-glutamyl-tRNA(Gln) + L-glutamine + ATP + H2O = L-glutaminyl-tRNA(Gln) + L-glutamate + ADP + phosphate + H(+). The enzyme catalyses L-aspartyl-tRNA(Asn) + L-glutamine + ATP + H2O = L-asparaginyl-tRNA(Asn) + L-glutamate + ADP + phosphate + 2 H(+). Its function is as follows. Allows the formation of correctly charged Asn-tRNA(Asn) or Gln-tRNA(Gln) through the transamidation of misacylated Asp-tRNA(Asn) or Glu-tRNA(Gln) in organisms which lack either or both of asparaginyl-tRNA or glutaminyl-tRNA synthetases. The reaction takes place in the presence of glutamine and ATP through an activated phospho-Asp-tRNA(Asn) or phospho-Glu-tRNA(Gln). The protein is Aspartyl/glutamyl-tRNA(Asn/Gln) amidotransferase subunit C of Erythrobacter litoralis (strain HTCC2594).